Reading from the N-terminus, the 171-residue chain is Siroheme decarboxylase NirH subunit (171 aa).

The protein belongs to the Ahb/Nir family. As to quaternary structure, probably forms a complex composed of NirD, NirL, NirG and NirH. All proteins are required for the total conversion of siroheme to didecarboxysiroheme.

It catalyses the reaction siroheme + 2 H(+) = 12,18-didecarboxysiroheme + 2 CO2. Its pathway is porphyrin-containing compound metabolism. Functionally, involved in heme d1 biosynthesis. Catalyzes the decarboxylation of siroheme into didecarboxysiroheme. The chain is Siroheme decarboxylase NirH subunit from Pseudomonas aeruginosa (strain ATCC 15692 / DSM 22644 / CIP 104116 / JCM 14847 / LMG 12228 / 1C / PRS 101 / PAO1).